We begin with the raw amino-acid sequence, 447 residues long: UPF0210 protein LBUL_0934 (447 aa).

The protein belongs to the UPF0210 family. In terms of assembly, homodimer.

The polypeptide is UPF0210 protein LBUL_0934 (Lactobacillus delbrueckii subsp. bulgaricus (strain ATCC BAA-365 / Lb-18)).